The primary structure comprises 322 residues: MGVDLESVSEATSGAIGSLLSTTILYPLDTCKSKFQAEVRARGQQKYRYLSDVMWEAISKGQVFSLYQGLGTKNFQSFISQFIYFYSYSYFKRVHSERTGSKSIGTKANLLIAAAAGACTSVLIQPLDTASSRMQTSEFGESKGLWKTLTEGSWADAFDGLGISLLLTSNPAIQYTVFDQLKQHLLKQKNAKAENGSSPVVLSAFMAFVLGAVSKSVATVLTYPAIRCKVMIQAADESKENETKKPRRRTRKTIPGVVYAIWRKEGMLGFFKGLQAQILKTVLSSALLLMIKEKITATTWILILAIRRTLFLTNTKGKLRSP.

Solcar repeat units lie at residues 5–94 (LESV…FKRV), 104–184 (IGTK…LKQH), and 202–298 (LSAF…ITAT). Transmembrane regions (helical) follow at residues 8–28 (VSEATSGAIGSLLSTTILYPL), 104–124 (IGTKANLLIAAAAGACTSVLI), 158–178 (FDGLGISLLLTSNPAIQYTVF), 201–221 (VLSAFMAFVLGAVSKSVATVL), 254–274 (IPGVVYAIWRKEGMLGFFKGL), and 286–306 (ALLLMIKEKITATTWILILAI).

It belongs to the mitochondrial carrier (TC 2.A.29) family. Expressed in stamens, pollen grains, seeds, leaves, cotyledons, roots, stems, flowers, hypocotyls and siliques.

It localises to the peroxisome membrane. In terms of biological role, peroxisomal adenine nucleotide transporter catalyzing the counterexchange of ATP with AMP. ATP is needed by reactions that generate acyl-CoA for peroxisomal fatty acid beta-oxidation during postgerminative growth. Required for the beta-oxidation reactions involved in auxin biosynthesis and for the conversion of seed-reserved triacylglycerols into sucrose that is necessary for growth before the onset of photosynthesis. The protein is Peroxisomal adenine nucleotide carrier 1 (PNC1) of Arabidopsis thaliana (Mouse-ear cress).